The primary structure comprises 126 residues: Holo-[acyl-carrier-protein] synthase (126 aa).

Residues Asp9 and Glu58 each contribute to the Mg(2+) site.

The protein belongs to the P-Pant transferase superfamily. AcpS family. The cofactor is Mg(2+).

It is found in the cytoplasm. It catalyses the reaction apo-[ACP] + CoA = holo-[ACP] + adenosine 3',5'-bisphosphate + H(+). In terms of biological role, transfers the 4'-phosphopantetheine moiety from coenzyme A to a Ser of acyl-carrier-protein. The sequence is that of Holo-[acyl-carrier-protein] synthase from Yersinia pseudotuberculosis serotype I (strain IP32953).